The primary structure comprises 227 residues: Mitochondrial inner membrane protease ATP23 (227 aa).

An a divalent metal cation-binding site is contributed by His-124. The active site involves Glu-125. His-128 contributes to the a divalent metal cation binding site.

The protein belongs to the peptidase M76 family. In terms of assembly, interacts with ATP6.

It localises to the mitochondrion inner membrane. In terms of biological role, has a dual role in the assembly of mitochondrial ATPase. Acts as a protease that removes the N-terminal 10 residues of mitochondrial ATPase CF(0) subunit 6 (ATP6) at the intermembrane space side. Also involved in the correct assembly of the membrane-embedded ATPase CF(0) particle, probably mediating association of ATP6 with the subunit 9 ring. The sequence is that of Mitochondrial inner membrane protease ATP23 (ATP23) from Saccharomyces cerevisiae (strain YJM789) (Baker's yeast).